We begin with the raw amino-acid sequence, 363 residues long: UDP-N-acetylglucosamine--N-acetylmuramyl-(pentapeptide) pyrophosphoryl-undecaprenol N-acetylglucosamine transferase (363 aa).

UDP-N-acetyl-alpha-D-glucosamine contacts are provided by residues 10–12 (TGG), Asn-124, Ser-195, Ile-250, and Gln-295.

The protein belongs to the glycosyltransferase 28 family. MurG subfamily.

Its subcellular location is the cell membrane. It catalyses the reaction di-trans,octa-cis-undecaprenyl diphospho-N-acetyl-alpha-D-muramoyl-L-alanyl-D-glutamyl-meso-2,6-diaminopimeloyl-D-alanyl-D-alanine + UDP-N-acetyl-alpha-D-glucosamine = di-trans,octa-cis-undecaprenyl diphospho-[N-acetyl-alpha-D-glucosaminyl-(1-&gt;4)]-N-acetyl-alpha-D-muramoyl-L-alanyl-D-glutamyl-meso-2,6-diaminopimeloyl-D-alanyl-D-alanine + UDP + H(+). Its pathway is cell wall biogenesis; peptidoglycan biosynthesis. Cell wall formation. Catalyzes the transfer of a GlcNAc subunit on undecaprenyl-pyrophosphoryl-MurNAc-pentapeptide (lipid intermediate I) to form undecaprenyl-pyrophosphoryl-MurNAc-(pentapeptide)GlcNAc (lipid intermediate II). In Listeria welshimeri serovar 6b (strain ATCC 35897 / DSM 20650 / CCUG 15529 / CIP 8149 / NCTC 11857 / SLCC 5334 / V8), this protein is UDP-N-acetylglucosamine--N-acetylmuramyl-(pentapeptide) pyrophosphoryl-undecaprenol N-acetylglucosamine transferase.